Consider the following 98-residue polypeptide: Cystatin-A (98 aa).

M1 is modified (N-acetylmethionine). Positions 46–50 match the Secondary area of contact motif; sequence QVVAG.

Belongs to the cystatin family.

The protein resides in the cytoplasm. Its function is as follows. This is an intracellular thiol proteinase inhibitor. This Bos taurus (Bovine) protein is Cystatin-A (CSTA).